The primary structure comprises 107 residues: Chlorobenzene dioxygenase, ferredoxin component (107 aa).

In terms of domain architecture, Rieske spans 4-99; that stretch reads TYIMRQSDLP…IKVEGGDVHV (96 aa). [2Fe-2S] cluster contacts are provided by Cys-43, His-45, Cys-62, and His-65.

Belongs to the bacterial ring-hydroxylating dioxygenase ferredoxin component family. As to quaternary structure, this dioxygenase system consists of four proteins: the two subunits of the oxygenase component (TecA1 and TecA2), a ferredoxin (TecA3) and a ferredoxin reductase (TecA4). [2Fe-2S] cluster is required as a cofactor.

Its pathway is aromatic compound metabolism. Functionally, part of the chlorobenzene dioxygenase system that catalyzes the dihydroxylation of a range of aromatic compounds, including chlorinated benzenes and toluenes, and dinuclear aromatics such as biphenyl and dibenzo-p-dioxin. In Cupriavidus sp. (strain PS12), this protein is Chlorobenzene dioxygenase, ferredoxin component.